The primary structure comprises 258 residues: Mediator of RNA polymerase II transcription subunit 4 (258 aa).

Residues 52 to 101 (FRKMLELAEEQAKVEEAMDQLRAKVEVHDREIQKLQKSLKDAELILSTAI) are a coiled coil. Disordered regions lie at residues 164 to 208 (GKSE…EVPN) and 234 to 258 (LETR…SDSQ). Over residues 166 to 190 (SEQNINGGTVTHQNSGMPSEQQRTL) the composition is skewed to polar residues. Gly residues predominate over residues 194-204 (AGSGSGSGAGG). A compositionally biased stretch (low complexity) spans 246-258 (STDSSSSSSSDSQ).

The protein belongs to the Mediator complex subunit 4 family. In terms of assembly, component of the Mediator complex, which includes at least MED4, MED6, MED14, MED17, MED18, MED20, MED21, MED23, MED24, MED27, MED30 and MED31. Interacts with MED10 and MED21.

It is found in the nucleus. In terms of biological role, component of the Mediator complex, a coactivator involved in the regulated transcription of nearly all RNA polymerase II-dependent genes. Mediator functions as a bridge to convey information from gene-specific regulatory proteins to the basal RNA polymerase II transcription machinery. Mediator is recruited to promoters by direct interactions with regulatory proteins and serves as a scaffold for the assembly of a functional preinitiation complex with RNA polymerase II and the general transcription factors. Required for activated transcription of the MtnA, MtnB and MtnD genes. The polypeptide is Mediator of RNA polymerase II transcription subunit 4 (MED4) (Drosophila melanogaster (Fruit fly)).